We begin with the raw amino-acid sequence, 89 residues long: Small ribosomal subunit protein bS20 (89 aa).

Belongs to the bacterial ribosomal protein bS20 family.

Its function is as follows. Binds directly to 16S ribosomal RNA. This is Small ribosomal subunit protein bS20 from Stenotrophomonas maltophilia (strain R551-3).